The sequence spans 202 residues: MADS-box transcription factor 33 (202 aa).

Residues 1–61 (MVRGKVQMRR…GKLHELATNG (61 aa)) form the MADS-box domain. In terms of domain architecture, K-box spans 87 to 177 (QQVAEQGIFL…QEKVKEQQKL (91 aa)).

As to expression, expressed in seedling roots.

The protein resides in the nucleus. In terms of biological role, probable transcription factor. This chain is MADS-box transcription factor 33 (MADS33), found in Oryza sativa subsp. japonica (Rice).